We begin with the raw amino-acid sequence, 665 residues long: Fructose-1,6-bisphosphatase class 3 (665 aa).

Belongs to the FBPase class 3 family. Mn(2+) is required as a cofactor.

It carries out the reaction beta-D-fructose 1,6-bisphosphate + H2O = beta-D-fructose 6-phosphate + phosphate. The protein operates within carbohydrate biosynthesis; gluconeogenesis. This Clostridium novyi (strain NT) protein is Fructose-1,6-bisphosphatase class 3.